A 141-amino-acid chain; its full sequence is Hemoglobin subunit alpha-A (141 aa).

Residues 1–141 (VLSGPDKTNV…VGAVLTAKYR (141 aa)) form the Globin domain. Histidine 58 contacts O2. Histidine 87 is a binding site for heme b.

This sequence belongs to the globin family. Heterotetramer of two alpha chains and two beta chains. In terms of tissue distribution, red blood cells.

Functionally, involved in oxygen transport from the lung to the various peripheral tissues. This chain is Hemoglobin subunit alpha-A (HBAA), found in Rhea americana (Greater rhea).